We begin with the raw amino-acid sequence, 403 residues long: S-adenosylmethionine synthase (403 aa).

Position 140-145 (140-145 (GKGSTD)) interacts with ATP.

The protein belongs to the AdoMet synthase 2 family. Requires Mg(2+) as cofactor.

It carries out the reaction L-methionine + ATP + H2O = S-adenosyl-L-methionine + phosphate + diphosphate. Its pathway is amino-acid biosynthesis; S-adenosyl-L-methionine biosynthesis; S-adenosyl-L-methionine from L-methionine: step 1/1. Its function is as follows. Catalyzes the formation of S-adenosylmethionine from methionine and ATP. The polypeptide is S-adenosylmethionine synthase (Sulfolobus acidocaldarius (strain ATCC 33909 / DSM 639 / JCM 8929 / NBRC 15157 / NCIMB 11770)).